We begin with the raw amino-acid sequence, 75 residues long: UPF0235 protein Mvan_2846 (75 aa).

It belongs to the UPF0235 family.

The sequence is that of UPF0235 protein Mvan_2846 from Mycolicibacterium vanbaalenii (strain DSM 7251 / JCM 13017 / BCRC 16820 / KCTC 9966 / NRRL B-24157 / PYR-1) (Mycobacterium vanbaalenii).